The chain runs to 110 residues: Ribonuclease P protein component (110 aa).

This sequence belongs to the RnpA family. As to quaternary structure, consists of a catalytic RNA component (M1 or rnpB) and a protein subunit.

The catalysed reaction is Endonucleolytic cleavage of RNA, removing 5'-extranucleotides from tRNA precursor.. In terms of biological role, RNaseP catalyzes the removal of the 5'-leader sequence from pre-tRNA to produce the mature 5'-terminus. It can also cleave other RNA substrates such as 4.5S RNA. The protein component plays an auxiliary but essential role in vivo by binding to the 5'-leader sequence and broadening the substrate specificity of the ribozyme. This Mesorhizobium japonicum (strain LMG 29417 / CECT 9101 / MAFF 303099) (Mesorhizobium loti (strain MAFF 303099)) protein is Ribonuclease P protein component.